Reading from the N-terminus, the 195-residue chain is Large ribosomal subunit protein eL6 (195 aa).

Serine 105 and serine 115 each carry phosphoserine.

Belongs to the eukaryotic ribosomal protein eL6 family. Component of the large ribosomal subunit (LSU). Mature yeast ribosomes consist of a small (40S) and a large (60S) subunit. The 40S small subunit contains 1 molecule of ribosomal RNA (18S rRNA) and at least 33 different proteins. The large 60S subunit contains 3 rRNA molecules (25S, 5.8S and 5S rRNA) and at least 46 different proteins.

It is found in the cytoplasm. The protein resides in the nucleus. The protein localises to the nucleolus. Its function is as follows. Component of the ribosome, a large ribonucleoprotein complex responsible for the synthesis of proteins in the cell. The small ribosomal subunit (SSU) binds messenger RNAs (mRNAs) and translates the encoded message by selecting cognate aminoacyl-transfer RNA (tRNA) molecules. The large subunit (LSU) contains the ribosomal catalytic site termed the peptidyl transferase center (PTC), which catalyzes the formation of peptide bonds, thereby polymerizing the amino acids delivered by tRNAs into a polypeptide chain. The nascent polypeptides leave the ribosome through a tunnel in the LSU and interact with protein factors that function in enzymatic processing, targeting, and the membrane insertion of nascent chains at the exit of the ribosomal tunnel. In Schizosaccharomyces pombe (strain 972 / ATCC 24843) (Fission yeast), this protein is Large ribosomal subunit protein eL6 (rpl6).